Here is a 192-residue protein sequence, read N- to C-terminus: uncharacterized protein (192 aa).

Residues histidine 29–serine 160 enclose the Nudix hydrolase domain. Positions glycine 67–alanine 89 match the Nudix box motif. Residues glutamate 83 and glutamate 87 each contribute to the Mg(2+) site.

Belongs to the Nudix hydrolase family. PCD1 subfamily. Mn(2+) is required as a cofactor. The cofactor is Mg(2+).

Its function is as follows. Probably mediates the hydrolysis of some nucleoside diphosphate derivatives. This is an uncharacterized protein from Shigella sonnei (strain Ss046).